The sequence spans 115 residues: Na(+)/H(+) antiporter subunit C1 (115 aa).

The next 3 membrane-spanning stretches (helical) occupy residues Met1–Leu21, Ile28–Gly48, and Leu72–Phe92.

The protein belongs to the CPA3 antiporters (TC 2.A.63) subunit C family. May form a heterooligomeric complex that consists of seven subunits: mnhA1, mnhB1, mnhC1, mnhD1, mnhE1, mnhF1 and mnhG1.

It is found in the cell membrane. Functionally, mnh complex is a Na(+)/H(+) antiporter involved in Na(+) excretion. The sequence is that of Na(+)/H(+) antiporter subunit C1 (mnhC1) from Staphylococcus epidermidis (strain ATCC 35984 / DSM 28319 / BCRC 17069 / CCUG 31568 / BM 3577 / RP62A).